Reading from the N-terminus, the 1164-residue chain is MAGGEDRGDGEPVSVVTVRVQYLEDTDPFACANFPEPRRAPTCSLDGALPLGAQIPAVHRLLGAPLKLEDCALQVSPSGYYLDTELSLEEQREMLEGFYEEISKGRKPTLILRTQLSVRVNAILEKLYSSSGPELRRSLFSLKQIFQEDKDLVPEFVHSEGLSCLIRVGAAADHNYQSYILRALGQLMLFVDGMLGVVAHSDTIQWLYTLCASLSRLVVKTALKLLLVFVEYSENNAPLFIRAVNSVASTTGAPPWANLVSILEEKNGADPELLVYTVTLINKTLAALPDQDSFYDVTDALEQQGMEALVQRHLGTAGTDVDLRTQLVLYENALKLEDGDIEEAPGAGGRRERRKPSSEEGKRSRRSLEGGGCPARAPEPGPTGPASPVGPTSSTGPALLTGPASSPVGPPSGLQASVNLFPTISVAPSADTSSERSIYKARFLENVAAAETEKQVALAQGRAETLAGAMPNEAGGHPDARQLWDSPETAPAARTPQSPAPCVLLRAQRSLAPEPKEPLIPASPKAEPIWELPTRAPRLSIGDLDFSDLGEDEDQDMLNVESVEAGKDIPAPSPPLPLLSGVPPPPPLPPPPPIKGPFPPPPPLPLAAPLPHSVPDSSALPTKRKTVKLFWRELKLAGGHGVSASRFGPCATLWASLDPVSVDTARLEHLFESRAKEVLPSKKAGEGRRTMTTVLDPKRSNAINIGLTTLPPVHVIKAALLNFDEFAVSKDGIEKLLTMMPTEEERQKIEEAQLANPDIPLGPAENFLMTLASIGGLAARLQLWAFKLDYDSMEREIAEPLFDLKVGMEQLVQNATFRCILATLLAVGNFLNGSQSSGFELSYLEKVSEVKDTVRRQSLLHHLCSLVLQTRPESSDLYSEIPALTRCAKVDFEQLTENLGQLERRSRAAEESLRSLAKHELAPALRARLTHFLDQCARRVAMLRIVHRRVCNRFHAFLLYLGYTPQAAREVRIMQFCHTLREFALEYRTCRERVLQQQQKQATYRERNKTRGRMITETEKFSGVAGEAPSNPSVPVAVSSGPGRGDADSHASMKSLLTSRPEDTTHNRRSRGMVQSSSPIMPTVGPSTASPEEPPGSSLPSDTSDEIMDLLVQSVTKSSPRALAARERKRSRGNRKSLRRTLKSGLGDDLVQALGLSKGPGLEV.

One can recognise a GBD/FH3 domain in the interval Ala-53–Leu-458. Disordered regions lie at residues Asp-340–Pro-411 and Met-470–Ala-500. Positions Lys-355–Leu-368 are enriched in basic and acidic residues. Ser-367 bears the Phosphoserine mark. Residues Gly-402 to Pro-411 show a composition bias toward low complexity. The residue at position 486 (Ser-486) is a Phosphoserine. The 129-residue stretch at Pro-487–Pro-615 folds into the FH1 domain. Thr-495 bears the Phosphothreonine mark. Phosphoserine is present on residues Ser-498, Ser-523, and Ser-573. The disordered stretch occupies residues Gly-566 to Ala-619. Residues Ala-571 to Ala-608 are compositionally biased toward pro residues. The tract at residues His-612–Gly-807 is interaction with ROCK1. The region spanning Asp-616–Arg-1013 is the FH2 domain. Thr-690 bears the Phosphothreonine mark. The stretch at Leu-884 to Leu-921 forms a coiled coil. The interval Lys-1020–Lys-1143 is disordered. Low complexity predominate over residues Ala-1028–Gly-1041. The DAD domain occupies Met-1053–Gly-1133. The span at Met-1073–Ala-1089 shows a compositional bias: polar residues. The segment covering Glu-1127–Leu-1142 has biased composition (basic residues).

This sequence belongs to the formin homology family. As to quaternary structure, self-associates via the FH2 domain. Binds to F-actin via its N-terminus. Binds to the cytoplasmic domain of CD21 via its C-terminus. Interacts with ROCK1 in a Src-dependent manner. Phosphorylated by ROCK1. Ubiquitous. Highly expressed in spleen.

Its subcellular location is the cytoplasm. The protein localises to the cytoskeleton. The protein resides in the cell projection. It localises to the bleb. Required for the assembly of F-actin structures, such as stress fibers. Depends on the Rho-ROCK cascade for its activity. Contributes to the coordination of microtubules with actin fibers and plays a role in cell elongation. Acts synergistically with ROCK1 to promote SRC-dependent non-apoptotic plasma membrane blebbing. The chain is FH1/FH2 domain-containing protein 1 (FHOD1) from Homo sapiens (Human).